Reading from the N-terminus, the 75-residue chain is UPF0346 protein LJ_1103 (75 aa).

Belongs to the UPF0346 family.

This is UPF0346 protein LJ_1103 from Lactobacillus johnsonii (strain CNCM I-12250 / La1 / NCC 533).